Consider the following 96-residue polypeptide: U-stichotoxin-Hau2b (96 aa).

A signal peptide spans 1-18 (MKPIFIVALLFSTCLVNA). 2 propeptides span residues 19 to 29 (KPSIDDAEMKR) and 30 to 33 (EPKP). 2 cysteine pairs are disulfide-bonded: C40/C51 and C43/C58. Propeptides lie at residues 62–64 (RKR) and 65–68 (EPKP). 2 disulfide bridges follow: C75-C86 and C78-C93.

It belongs to the sea anemone BBH family.

The protein localises to the secreted. The protein resides in the nematocyst. Functionally, neurotoxin that paralyzes freshwater crabs at high concentration. The sequence is that of U-stichotoxin-Hau2b from Heteractis aurora (Banded sea anemone).